Reading from the N-terminus, the 187-residue chain is UPF0301 protein WIGBR1650 (187 aa).

Belongs to the UPF0301 (AlgH) family.

In Wigglesworthia glossinidia brevipalpis, this protein is UPF0301 protein WIGBR1650.